A 43-amino-acid polypeptide reads, in one-letter code: METGILVVIFISCLLVSFTGYTIYTAFGQPSKQLRDPFEEHED.

Residues glycine 4–tyrosine 24 form a helical membrane-spanning segment.

It belongs to the PsbN family.

The protein localises to the plastid. Its subcellular location is the chloroplast thylakoid membrane. May play a role in photosystem I and II biogenesis. This is Protein PsbN from Chaetosphaeridium globosum (Charophycean green alga).